Reading from the N-terminus, the 301-residue chain is Probable alpha-L-glutamate ligase (301 aa).

An ATP-grasp domain is found at 104-287; sequence LQLLSRRGVG…VAGLIIQYLE (184 aa). ATP is bound by residues Lys-141, 178-179, Asp-187, and 211-213; these read EY and RSN. Mg(2+) contacts are provided by Asp-248, Glu-260, and Asn-262. Residues Asp-248, Glu-260, and Asn-262 each contribute to the Mn(2+) site.

This sequence belongs to the RimK family. It depends on Mg(2+) as a cofactor. Mn(2+) serves as cofactor.

This Stutzerimonas stutzeri (strain A1501) (Pseudomonas stutzeri) protein is Probable alpha-L-glutamate ligase.